The chain runs to 124 residues: Large ribosomal subunit protein bL12c (124 aa).

The protein belongs to the bacterial ribosomal protein bL12 family. In terms of assembly, homodimer. Part of the ribosomal stalk of the 50S ribosomal subunit. Forms a multimeric L10(L12)X complex, where L10 forms an elongated spine to which 2 to 4 L12 dimers bind in a sequential fashion. Binds GTP-bound translation factors.

The protein resides in the plastid. The protein localises to the chloroplast. Functionally, forms part of the ribosomal stalk which helps the ribosome interact with GTP-bound translation factors. Is thus essential for accurate translation. This is Large ribosomal subunit protein bL12c from Cyanidioschyzon merolae (strain NIES-3377 / 10D) (Unicellular red alga).